A 211-amino-acid polypeptide reads, in one-letter code: MTLTTQFYTMLAMSGMGLWLGASLDTYRLFVIRAKTARWLLFIHDILFWIMQGLLFFYVLLHVNEGEFRIYIFLAVLLGVATYQSLCKRIYIKILKFVIYLVVSVYQFFKKLIQHVLFRPIVWTCGAIIWLAAFLFKKTYSLIGFLLLCLYKIVMVLCFPIRFIAKQCLKLLPVKMRLTFRRYFEKGAGFLKKKKKLLITIRTTITRFLKR.

Helical transmembrane passes span 7 to 27 (FYTMLAMSGMGLWLGASLDTY), 40 to 60 (LLFIHDILFWIMQGLLFFYVL), 66 to 86 (GEFRIYIFLAVLLGVATYQSL), 90 to 110 (IYIKILKFVIYLVVSVYQFFK), 116 to 136 (VLFRPIVWTCGAIIWLAAFLF), and 141 to 161 (SLIGFLLLCLYKIVMVLCFPI).

The protein localises to the forespore outer membrane. In terms of biological role, required for sporulation. Plays an important role in cortex and coat formation. In Bacillus subtilis (strain 168), this protein is Spore protein YabQ (yabQ).